Here is a 177-residue protein sequence, read N- to C-terminus: Ribonuclease M5 (177 aa).

Residues 5–99 (KQIIIVEGKT…NKTSKKIGIA (95 aa)) form the Toprim domain. Mg(2+)-binding residues include glutamate 11, aspartate 59, and aspartate 61.

Belongs to the ribonuclease M5 family. Requires Mg(2+) as cofactor.

Its subcellular location is the cytoplasm. The catalysed reaction is Endonucleolytic cleavage of RNA, removing 21 and 42 nucleotides, respectively, from the 5'- and 3'-termini of a 5S-rRNA precursor.. In terms of biological role, required for correct processing of both the 5' and 3' ends of 5S rRNA precursor. Cleaves both sides of a double-stranded region yielding mature 5S rRNA in one step. The protein is Ribonuclease M5 of Mycoplasma mycoides subsp. mycoides SC (strain CCUG 32753 / NCTC 10114 / PG1).